The chain runs to 197 residues: HTH-type transcriptional regulator BetI (197 aa).

The HTH tetR-type domain occupies 8–68 (PIRRQQLIQA…ATMRHLMNAL (61 aa)). The H-T-H motif DNA-binding region spans 31–50 (SIALIARLAGVSNGIISHYF).

The protein operates within amine and polyamine biosynthesis; betaine biosynthesis via choline pathway [regulation]. In terms of biological role, repressor involved in the biosynthesis of the osmoprotectant glycine betaine. It represses transcription of the choline transporter BetT and the genes of BetAB involved in the synthesis of glycine betaine. This chain is HTH-type transcriptional regulator BetI, found in Pseudomonas syringae pv. tomato (strain ATCC BAA-871 / DC3000).